The following is a 96-amino-acid chain: HssA/B-like protein 25 (96 aa).

It belongs to the hssA/B family.

This Dictyostelium discoideum (Social amoeba) protein is HssA/B-like protein 25 (hssl25).